Reading from the N-terminus, the 301-residue chain is Recombination-associated protein RdgC (301 aa).

The protein belongs to the RdgC family.

The protein resides in the cytoplasm. It localises to the nucleoid. In terms of biological role, may be involved in recombination. This chain is Recombination-associated protein RdgC, found in Xanthomonas oryzae pv. oryzae (strain MAFF 311018).